Reading from the N-terminus, the 322-residue chain is uncharacterized protein (322 aa).

Residues 1–27 form the signal peptide; it reads MKRLFWNLKHKKAWLVLLLGTGMILSS. Cys-28 carries the N-palmitoyl cysteine lipid modification. Cys-28 is lipidated: S-diacylglycerol cysteine. A compositionally biased stretch (polar residues) spans 235 to 254; it reads DNSTNPNAPGSGQGDSTPPA. Positions 235–298 are disordered; that stretch reads DNSTNPNAPG…AVQRSQKSYG (64 aa). The span at 257-267 shows a compositional bias: gly residues; the sequence is GEGGGSDGSSG. Polar residues predominate over residues 274 to 296; that stretch reads NGQNTTPTSPQSSQPAVQRSQKS.

The protein localises to the cell membrane. This is an uncharacterized protein from Mycoplasma genitalium (strain ATCC 33530 / DSM 19775 / NCTC 10195 / G37) (Mycoplasmoides genitalium).